The following is a 125-amino-acid chain: Fluoride-specific ion channel FluC (125 aa).

Transmembrane regions (helical) follow at residues 36–56 (GTIF…FLSI), 65–85 (FILF…TFAY), and 99–119 (IIYF…GMFL). Glycine 75 and threonine 78 together coordinate Na(+).

Belongs to the fluoride channel Fluc/FEX (TC 1.A.43) family.

Its subcellular location is the cell inner membrane. The catalysed reaction is fluoride(in) = fluoride(out). Na(+) is not transported, but it plays an essential structural role and its presence is essential for fluoride channel function. Fluoride-specific ion channel. Important for reducing fluoride concentration in the cell, thus reducing its toxicity. This chain is Fluoride-specific ion channel FluC, found in Thermosipho africanus (strain TCF52B).